A 73-amino-acid polypeptide reads, in one-letter code: MKFTVRVKPNSKKIFFRKEEDGSVTIAVREPALEGKANEAVIETISREMKIPKRKIRIVSGEKGKKKTIEIDP.

Belongs to the UPF0235 family.

This chain is UPF0235 protein LBL_1291, found in Leptospira borgpetersenii serovar Hardjo-bovis (strain L550).